We begin with the raw amino-acid sequence, 71 residues long: Large ribosomal subunit protein uL29 (71 aa).

Belongs to the universal ribosomal protein uL29 family.

The chain is Large ribosomal subunit protein uL29 from Rickettsia massiliae (strain Mtu5).